Here is a 647-residue protein sequence, read N- to C-terminus: XK-related protein 4 (647 aa).

The segment covering 1–15 (MAAKSDGRLKMKKSS) has biased composition (basic and acidic residues). The tract at residues 1 to 44 (MAAKSDGRLKMKKSSDVAFTPLQNSDNSGSVQGLAPGLPSGSGA) is disordered. Positions 21 to 31 (PLQNSDNSGSV) are enriched in polar residues. 2 helical membrane-spanning segments follow: residues 112–132 (WILA…WLAV) and 142–162 (WFGL…VFSF). Ser197 carries the post-translational modification Phosphoserine. Residues 197-238 (SAAGEGEVRPSTPQRQASNASKSNIAATNSGSNSNGATRTSG) form a disordered region. The span at 207–236 (STPQRQASNASKSNIAATNSGSNSNGATRT) shows a compositional bias: polar residues. 8 helical membrane-spanning segments follow: residues 245-265 (CSFC…GQIW), 303-323 (HLLA…CIIV), 328-348 (LQAL…WALA), 362-382 (KPIS…TIAA), 393-415 (VFQL…WIVH), 425-445 (WEEI…WFNV), 454-474 (LFIY…LWYL), and 484-504 (FAIP…VFML).

The protein belongs to the XK family. As to quaternary structure, homodimer; homodimerization takes place upon caspase cleavage. Interacts with the processed C-terminus of XRCC4 (protein XRCC4, C-terminus); interaction promotes the phospholipid scramblase activity. Post-translationally, undergoes proteolytic processing by caspase-3 (CASP3), caspase-6 (CASP6) and caspase-7 (CASP7) to generate the XK-related protein 4, processed form, leading to its activation. Highly expressed in expressed in the brain; weakly expressed in the spleen, thymus, uterus, blood vessels and fetus.

It localises to the cell membrane. The enzyme catalyses a 1,2-diacyl-sn-glycero-3-phospho-L-serine(in) = a 1,2-diacyl-sn-glycero-3-phospho-L-serine(out). Its activity is regulated as follows. Phospholipid scramblase activity is activated upon caspase cleavage to generate the XK-related protein 4, processed form. Does not act prior the onset of apoptosis. Homodimerizes upon caspase cleavage. Phospholipid scramblase activity is activated following interaction with the processed C-terminus of XRCC4 (protein XRCC4, C-terminus). Phospholipid scramblase that promotes phosphatidylserine exposure on apoptotic cell surface. Phosphatidylserine is a specific marker only present at the surface of apoptotic cells and acts as a specific signal for engulfment. In Mus musculus (Mouse), this protein is XK-related protein 4.